Consider the following 556-residue polypeptide: Formate--tetrahydrofolate ligase (556 aa).

An ATP-binding site is contributed by 65 to 72 (TPAGEGKS).

The protein belongs to the formate--tetrahydrofolate ligase family.

It carries out the reaction (6S)-5,6,7,8-tetrahydrofolate + formate + ATP = (6R)-10-formyltetrahydrofolate + ADP + phosphate. It participates in one-carbon metabolism; tetrahydrofolate interconversion. The protein is Formate--tetrahydrofolate ligase of Streptococcus mutans serotype c (strain ATCC 700610 / UA159).